The following is a 223-amino-acid chain: Charged multivesicular body protein 3 (223 aa).

Gly-2 carries N-myristoyl glycine lipidation. Residues 2 to 113 (GLFGKTQEKP…LQKSTEVMKA (112 aa)) form an intramolecular interaction with C-terminus region. A coiled-coil region spans residues 22-54 (KIRKEMRVVDRQIRDIQREEEKVKRSVKDAAKK). 2 important for autoinhibitory function regions span residues 59–64 (VCVVLA) and 168–169 (IL). A coiled-coil region spans residues 149–223 (ESMDDQEEME…MQSRLATLRS (75 aa)). The interval 151-221 (MDDQEEMEEA…EAMQSRLATL (71 aa)) is intramolecular interaction with N-terminus. Residues 151 to 223 (MDDQEEMEEA…MQSRLATLRS (73 aa)) form an interaction with VPS4A region. A Glycyl lysine isopeptide (Lys-Gly) (interchain with G-Cter in ubiquitin) cross-link involves residue Lys-179. Residues 180–223 (APSKVTDALPEPEPAGAMAASEGDEEDDEEDLEAMQSRLATLRS) form a disordered region. 3 interaction with STAMBP regions span residues 196–223 (AMAA…TLRS), 204–208 (EEDDE), and 222–223 (RS). The residue at position 200 (Ser-200) is a Phosphoserine. Positions 201 to 212 (EGDEEDDEEDLE) match the MIT-interacting motif motif. The segment covering 201 to 212 (EGDEEDDEEDLE) has biased composition (acidic residues).

Belongs to the SNF7 family. Probable core component of the endosomal sorting required for transport complex III (ESCRT-III). ESCRT-III components are thought to multimerize to form a flat lattice on the perimeter membrane of the endosome. Several assembly forms of ESCRT-III may exist that interact and act sequentially. Forms a metastable monomer in solution; its core structure (without part of the putative autoinhibitory C-terminal acidic region) oligomerizes into a flat lattice via two different dimerization interfaces. In vitro, heteromerizes with CHMP2A (but not CHMP4) to form helical tubular structures that expose membrane-interacting sites on the outside whereas VPS4B can associate on the inside of the tubule. May interact with IGFBP7; the relevance of such interaction however remains unclear. Interacts with CHMP2A. Interacts with CHMP4A; the interaction requires the release of CHMP4A autoinhibition. Interacts with VPS4A. Interacts with STAMBP; the interaction appears to relieve the autoinhibition of CHMP3. Interacts with VTA1.

The protein localises to the cytoplasm. Its subcellular location is the cytosol. It is found in the membrane. It localises to the endosome. The protein resides in the late endosome membrane. Functionally, probable core component of the endosomal sorting required for transport complex III (ESCRT-III) which is involved in multivesicular bodies (MVBs) formation and sorting of endosomal cargo proteins into MVBs. MVBs contain intraluminal vesicles (ILVs) that are generated by invagination and scission from the limiting membrane of the endosome and mostly are delivered to lysosomes enabling degradation of membrane proteins, such as stimulated growth factor receptors, lysosomal enzymes and lipids. The MVB pathway appears to require the sequential function of ESCRT-O, -I,-II and -III complexes. ESCRT-III proteins mostly dissociate from the invaginating membrane before the ILV is released. The ESCRT machinery also functions in topologically equivalent membrane fission events, such as the terminal stages of cytokinesis. ESCRT-III proteins are believed to mediate the necessary vesicle extrusion and/or membrane fission activities, possibly in conjunction with the AAA ATPase VPS4. Selectively binds to phosphatidylinositol 3,5-bisphosphate PtdIns(3,5)P2 and PtdIns(3,4)P2 in preference to other phosphoinositides tested. Involved in late stages of cytokinesis. Plays a role in endosomal sorting/trafficking of EGF receptor. The chain is Charged multivesicular body protein 3 (Chmp3) from Rattus norvegicus (Rat).